We begin with the raw amino-acid sequence, 358 residues long: Glutamine synthetase (358 aa).

In terms of domain architecture, GS beta-grasp spans 26–105 (ILAEYIWIDG…VLAECWNADG (80 aa)). A GS catalytic domain is found at 112-358 (HRHECAKIME…IMMETICGGI (247 aa)).

It belongs to the glutamine synthetase family. As to quaternary structure, homooctamer.

It localises to the cytoplasm. The catalysed reaction is L-glutamate + NH4(+) + ATP = L-glutamine + ADP + phosphate + H(+). The polypeptide is Glutamine synthetase (GLN1) (Tuber borchii (White truffle)).